Here is a 328-residue protein sequence, read N- to C-terminus: DNA-directed RNA polymerase subunit alpha (328 aa).

Positions 1-234 are alpha N-terminal domain (alpha-NTD); that stretch reads MQGSVTEFLK…EQLDAFVDLR (234 aa). The segment at 248–328 is alpha C-terminal domain (alpha-CTD); the sequence is FDPILLRPVD…NWPPASIAED (81 aa).

This sequence belongs to the RNA polymerase alpha chain family. Homodimer. The RNAP catalytic core consists of 2 alpha, 1 beta, 1 beta' and 1 omega subunit. When a sigma factor is associated with the core the holoenzyme is formed, which can initiate transcription.

The enzyme catalyses RNA(n) + a ribonucleoside 5'-triphosphate = RNA(n+1) + diphosphate. Functionally, DNA-dependent RNA polymerase catalyzes the transcription of DNA into RNA using the four ribonucleoside triphosphates as substrates. The protein is DNA-directed RNA polymerase subunit alpha of Haemophilus influenzae (strain PittEE).